The chain runs to 632 residues: Probable potassium transport system protein Kup 2 (632 aa).

12 helical membrane-spanning segments follow: residues 19–39 (FWGL…TSPL), 58–78 (MIVL…VTAK), 110–130 (MFLM…SMIT), 147–167 (PALE…LFAV), 178–198 (AFGP…IVHI), 216–236 (FLLS…LAVT), 257–277 (WLFF…ALVL), 290–310 (MVPE…TVIA), 347–367 (IYLP…VLLF), 377–397 (YGIA…VVIW), 404–424 (AAVA…FFSA), and 429–449 (LFEG…TIWT).

Belongs to the HAK/KUP transporter (TC 2.A.72) family.

The protein resides in the cell inner membrane. It catalyses the reaction K(+)(in) + H(+)(in) = K(+)(out) + H(+)(out). Functionally, transport of potassium into the cell. Likely operates as a K(+):H(+) symporter. The protein is Probable potassium transport system protein Kup 2 of Bradyrhizobium sp. (strain BTAi1 / ATCC BAA-1182).